Reading from the N-terminus, the 148-residue chain is Extracellular globin-2B (148 aa).

Residues 3-148 (CCSAADRHEV…IADVIKAELP (146 aa)) enclose the Globin domain. Cysteine 4 and cysteine 135 are joined by a disulfide. Histidine 98 contributes to the heme b binding site.

Belongs to the globin family. Disulfide bonded trimer of chains IIA, IIB, and IIC.

It localises to the secreted. This chain is Extracellular globin-2B, found in Tylorrhynchus heterochetus (Japanese palolo worm).